Here is a 1258-residue protein sequence, read N- to C-terminus: Regulator of G-protein signaling 22 (1258 aa).

Positions 581-604 are disordered; it reads QQLGRSEPLNAVSSKDGGLEKGSK. RGS domains are found at residues 845–973 and 1014–1138; these read TFTD…ASRQ and AFRK…TDEK. Residues 1145 to 1172 form a disordered region; that stretch reads RRQEHKQKRKASDTEEDKAGKSGVKQYA. The segment covering 1154-1164 has biased composition (basic and acidic residues); that stretch reads KASDTEEDKAG.

In terms of assembly, interacts with GNA11, GNA12 and GNA13. In terms of tissue distribution, expressed testis, including in Leydig cells and spermatogenic cells from the spermatogonia to spermatid stages (at protein level).

Its subcellular location is the cytoplasm. It localises to the nucleus. Functionally, inhibits signal transduction by increasing the GTPase activity of G protein alpha subunits thereby driving them into their inactive GDP-bound form. In Mus musculus (Mouse), this protein is Regulator of G-protein signaling 22 (Rgs22).